We begin with the raw amino-acid sequence, 243 residues long: MTQIIPALDLIDGEVVRLVKGDYEQKKVYKYNPLKKFKEYEKAGAKELHLVDLTGAKDPSKRQFALIEKLAKEVSVNLQVGGGIRSKAEARALLDCGVKRVVIGSMAIKDATLCLEILKEFGSEAIVLALDTILKEDYVVAVNAWQEASDKKLMEVLDFYSNKGLKHILCTDISKDGTMQGVNARLYKLIHEIFPHICIQASGGVASLKDLENLKGICSGVIVGKALLDGVFSVEEGIRCLEN.

Aspartate 9 acts as the Proton acceptor in catalysis. Catalysis depends on aspartate 131, which acts as the Proton donor.

The protein belongs to the HisA/HisF family.

It localises to the cytoplasm. The catalysed reaction is 1-(5-phospho-beta-D-ribosyl)-5-[(5-phospho-beta-D-ribosylamino)methylideneamino]imidazole-4-carboxamide = 5-[(5-phospho-1-deoxy-D-ribulos-1-ylimino)methylamino]-1-(5-phospho-beta-D-ribosyl)imidazole-4-carboxamide. The protein operates within amino-acid biosynthesis; L-histidine biosynthesis; L-histidine from 5-phospho-alpha-D-ribose 1-diphosphate: step 4/9. The chain is 1-(5-phosphoribosyl)-5-[(5-phosphoribosylamino)methylideneamino] imidazole-4-carboxamide isomerase from Campylobacter jejuni (strain RM1221).